The following is a 229-amino-acid chain: Potassium/proton antiporter CemA (229 aa).

Transmembrane regions (helical) follow at residues 7–27 (FIPFLYLISIVFLPWWIYLSF), 106–126 (MILHFSTNLICFLILGGYSIL), 154–174 (ILLVTDLCIGFHSPQGWELLI), and 189–209 (IISSLVSTFPVILDTILKYWI).

It belongs to the CemA family.

The protein localises to the plastid. It is found in the chloroplast inner membrane. The catalysed reaction is K(+)(in) + H(+)(out) = K(+)(out) + H(+)(in). In terms of biological role, contributes to K(+)/H(+) antiport activity by supporting proton efflux to control proton extrusion and homeostasis in chloroplasts in a light-dependent manner to modulate photosynthesis. Prevents excessive induction of non-photochemical quenching (NPQ) under continuous-light conditions. Indirectly promotes efficient inorganic carbon uptake into chloroplasts. This Spinacia oleracea (Spinach) protein is Potassium/proton antiporter CemA.